The following is a 252-amino-acid chain: 2-succinyl-6-hydroxy-2,4-cyclohexadiene-1-carboxylate synthase (252 aa).

The protein belongs to the AB hydrolase superfamily. MenH family. In terms of assembly, monomer.

The enzyme catalyses 5-enolpyruvoyl-6-hydroxy-2-succinyl-cyclohex-3-ene-1-carboxylate = (1R,6R)-6-hydroxy-2-succinyl-cyclohexa-2,4-diene-1-carboxylate + pyruvate. It functions in the pathway quinol/quinone metabolism; 1,4-dihydroxy-2-naphthoate biosynthesis; 1,4-dihydroxy-2-naphthoate from chorismate: step 3/7. The protein operates within quinol/quinone metabolism; menaquinone biosynthesis. Its function is as follows. Catalyzes a proton abstraction reaction that results in 2,5-elimination of pyruvate from 2-succinyl-5-enolpyruvyl-6-hydroxy-3-cyclohexene-1-carboxylate (SEPHCHC) and the formation of 2-succinyl-6-hydroxy-2,4-cyclohexadiene-1-carboxylate (SHCHC). This Escherichia coli O157:H7 protein is 2-succinyl-6-hydroxy-2,4-cyclohexadiene-1-carboxylate synthase.